We begin with the raw amino-acid sequence, 267 residues long: Methylglyoxal reductase DkgB (267 aa).

Residue tyrosine 39 is the Proton donor of the active site. Histidine 97 contributes to the substrate binding site. NADP(+) is bound at residue 179-231; it reads MTLAYGKALAEPVIKTIAEQHGATPAQVILSWAMQLGYGVIPSSTKAANLASN.

Belongs to the aldo/keto reductase family. As to quaternary structure, monomer.

Its subcellular location is the cytoplasm. The enzyme catalyses hydroxyacetone + NADP(+) = methylglyoxal + NADPH + H(+). Its function is as follows. Aldo-keto reductase that significantly contributes to cellular methylglyoxal detoxification by catalyzing the NADPH-dependent conversion of methylglyoxal to acetol. This chain is Methylglyoxal reductase DkgB, found in Yersinia pestis.